A 99-amino-acid chain; its full sequence is MPKKKLIGEVVSDKMDKTVVVAVSTLVKHPRVGKYIKRTKKYYAHDENNECRDGDIVEIIESRPLSKLKRWRVLRIVERSVFADETLDEELEGGSSDDN.

Belongs to the universal ribosomal protein uS17 family. In terms of assembly, part of the 30S ribosomal subunit.

One of the primary rRNA binding proteins, it binds specifically to the 5'-end of 16S ribosomal RNA. The chain is Small ribosomal subunit protein uS17 from Thermosipho africanus (strain TCF52B).